We begin with the raw amino-acid sequence, 725 residues long: ATP-dependent DNA helicase II subunit 2 (725 aa).

One can recognise a Ku domain in the interval 232–478 (LTLGDPQKYP…QQAMSDYVDA (247 aa)).

The protein belongs to the ku80 family. Heterodimer of mus-51/ku70 and mus-52/ku80.

It is found in the nucleus. Its subcellular location is the chromosome. It localises to the telomere. It catalyses the reaction ATP + H2O = ADP + phosphate + H(+). In terms of biological role, single-stranded DNA-dependent ATP-dependent helicase. Involved in non-homologous end joining (NHEJ) DNA double strand break repair. DNA-binding is sequence-independent but has a high affinity to nicks in double-stranded DNA and to the ends of duplex DNA. Binds to naturally occurring chromosomal ends, and therefore provides chromosomal end protection. Required also for telomere recombination to repair telomeric ends in the absence of telomerase. ku70, of the ku70/ku80 heterodimer, binds to the stem loop of tlc1, the RNA component of telomerase. Involved in telomere maintenance. Interacts with telomeric repeats and subtelomeric sequences thereby controlling telomere length and protecting against subtelomeric rearrangement. Maintains telomeric chromatin, which is involved in silencing the expression of genes located at the telomere. Required for mating-type switching. The polypeptide is ATP-dependent DNA helicase II subunit 2 (mus-52) (Neurospora crassa (strain ATCC 24698 / 74-OR23-1A / CBS 708.71 / DSM 1257 / FGSC 987)).